Reading from the N-terminus, the 187-residue chain is UPF0301 protein HS_0009 (187 aa).

The protein belongs to the UPF0301 (AlgH) family.

This is UPF0301 protein HS_0009 from Histophilus somni (strain 129Pt) (Haemophilus somnus).